Here is a 468-residue protein sequence, read N- to C-terminus: Malate-2H(+)/Na(+)-lactate antiporter (468 aa).

12 consecutive transmembrane segments (helical) span residues 9-29 (LFEI…FTVF), 30-50 (LDLP…LLGI), 73-93 (AVLI…GGVV), 96-116 (LIYY…TLII), 136-156 (IAMI…AGAI), 192-212 (LYLS…VGFM), 233-253 (TFDI…LLAM), 258-278 (MPVI…FQGM), 309-329 (IVGM…GGLL), 357-377 (LIVA…LILT), 405-425 (LTSG…ILGV), and 428-448 (FSYL…IIYG).

It belongs to the NhaC Na(+)/H(+) (TC 2.A.35) antiporter family.

Its subcellular location is the cell membrane. Couples proton uptake and Na(+) efflux to the substrate-product malate/lactate antiport, in an electroneutral malate-2H(+)/Na(+)-lactate exchange. Plays a role in supporting growth to high density on malate at reduced protonmotive force. The polypeptide is Malate-2H(+)/Na(+)-lactate antiporter (mleN) (Bacillus subtilis (strain 168)).